Reading from the N-terminus, the 98-residue chain is N(2)-fixation sustaining protein CowN (98 aa).

Belongs to the CowN family.

Is required to sustain N(2)-dependent growth in the presence of low levels of carbon monoxide (CO). Probably acts by protecting the N(2) fixation ability of the nitrogenase complex, which is inactivated in the presence of CO. This Trichlorobacter lovleyi (strain ATCC BAA-1151 / DSM 17278 / SZ) (Geobacter lovleyi) protein is N(2)-fixation sustaining protein CowN.